We begin with the raw amino-acid sequence, 406 residues long: Peptidase T (406 aa).

H82 is a binding site for Zn(2+). D84 is a catalytic residue. D142 serves as a coordination point for Zn(2+). E176 functions as the Proton acceptor in the catalytic mechanism. Positions 177, 199, and 381 each coordinate Zn(2+).

This sequence belongs to the peptidase M20B family. It depends on Zn(2+) as a cofactor.

Its subcellular location is the cytoplasm. The catalysed reaction is Release of the N-terminal residue from a tripeptide.. Its function is as follows. Cleaves the N-terminal amino acid of tripeptides. The polypeptide is Peptidase T (Streptococcus agalactiae serotype III (strain NEM316)).